Consider the following 99-residue polypeptide: Cell division topological specificity factor (99 aa).

The protein belongs to the MinE family.

Prevents the cell division inhibition by proteins MinC and MinD at internal division sites while permitting inhibition at polar sites. This ensures cell division at the proper site by restricting the formation of a division septum at the midpoint of the long axis of the cell. The protein is Cell division topological specificity factor of Tolumonas auensis (strain DSM 9187 / NBRC 110442 / TA 4).